Reading from the N-terminus, the 102-residue chain is Small ribosomal subunit protein uS10 (102 aa).

It belongs to the universal ribosomal protein uS10 family. As to quaternary structure, part of the 30S ribosomal subunit.

In terms of biological role, involved in the binding of tRNA to the ribosomes. The chain is Small ribosomal subunit protein uS10 from Bartonella henselae (strain ATCC 49882 / DSM 28221 / CCUG 30454 / Houston 1) (Rochalimaea henselae).